The sequence spans 286 residues: MFGFVKYLFKLQFLFILAAVLAGLYRTEIKQFANRHAANYVDKADVETVSLQFKAANENTATVLTSAELSKYNGEDGQPIYLALLGSVFDVTRGIKHYGTGCSYNFFVGRDASVAFISGEFEEYDPQTADDVLTLKPNDLLGLANWRDFYEKEYIYKGKLIGRFYDEQGEPTTYYHKYLALLEQAQIAKAEVDELRSKYPGCNIEWSEAKGTRVWCTNTSGDGKERAWTGFPRKLYSRGNKNFNCACVPESELDQIDAEGQAAHGDVMFKTYDNCSSRAKECFYRV.

The signal sequence occupies residues 1-23 (MFGFVKYLFKLQFLFILAAVLAG). A Cytochrome b5 heme-binding domain is found at 61–145 (ATVLTSAELS…KPNDLLGLAN (85 aa)). Positions 176 to 200 (HKYLALLEQAQIAKAEVDELRSKYP) form a coiled coil.

The protein belongs to the cytochrome b5 family. MAPR subfamily.

The protein resides in the secreted. Its function is as follows. Heme-binding protein. In Drosophila pseudoobscura pseudoobscura (Fruit fly), this protein is Neuferricin homolog.